The sequence spans 408 residues: MYIPESIGTPLTPNATKVMLLGSGELGKEVAIAFQRLGLEVHAVDRYEHAPAHQVAHFSYVIDMTDAAQVRELVERVRPDFVIPEIEALATDELVKIEEEGLATIVPTARAAKLTMNREGIRKLAAEELGLPTSNYEFCSTFEEFSAAAEKLGYPNVVKPVMSSSGKGQSVLRSSDDLQAAWDYAMSGARVANSRVIVEAFVEFDYEITLLTVRSIDPTTSKPATWFCEPIGHRQEDGDYVESWQPMEMTPRALENARSVAARITNALGGRGVFGVELFVSGDDVYFSEVSPRPHDTGLVTLATQRFSEFELHAKAILGLPVDVTLISPGASAVIYGGIESEGVSYTGLAEALAVAETDLRIFAKPEAFTKRRMGVAVSTAEDVAAARDRATLAAAAIKVHPGNSAEA.

N(1)-(5-phospho-beta-D-ribosyl)glycinamide is bound by residues 25 to 26 and Glu-85; that span reads EL. ATP is bound by residues Arg-118, Lys-159, 164 to 169, 199 to 202, and Glu-207; these read SSGKGQ and EAFV. The 196-residue stretch at 123-318 folds into the ATP-grasp domain; the sequence is KLAAEELGLP…EFELHAKAIL (196 aa). 2 residues coordinate Mg(2+): Glu-277 and Glu-289. N(1)-(5-phospho-beta-D-ribosyl)glycinamide-binding positions include Asp-296, Lys-365, and 372–373; that span reads RR.

This sequence belongs to the PurK/PurT family. As to quaternary structure, homodimer.

The catalysed reaction is N(1)-(5-phospho-beta-D-ribosyl)glycinamide + formate + ATP = N(2)-formyl-N(1)-(5-phospho-beta-D-ribosyl)glycinamide + ADP + phosphate + H(+). It functions in the pathway purine metabolism; IMP biosynthesis via de novo pathway; N(2)-formyl-N(1)-(5-phospho-D-ribosyl)glycinamide from N(1)-(5-phospho-D-ribosyl)glycinamide (formate route): step 1/1. In terms of biological role, involved in the de novo purine biosynthesis. Catalyzes the transfer of formate to 5-phospho-ribosyl-glycinamide (GAR), producing 5-phospho-ribosyl-N-formylglycinamide (FGAR). Formate is provided by PurU via hydrolysis of 10-formyl-tetrahydrofolate. This Corynebacterium glutamicum (strain R) protein is Formate-dependent phosphoribosylglycinamide formyltransferase.